Here is a 346-residue protein sequence, read N- to C-terminus: MTSVRKTMELIKELVSIPSPTGNTYEVINYIESLLKEWKVETVRNHKGGLIATLPGRDTSRHRMLTAHVDTLGAMVKEIKADGRLKIDLIGGFRYNSIEGEYCQIETASGKMYTGTILMHQTSVHVYKDAGKAERNQENMEIRLDEPVHCRKDTEELGIGVGDFVSFDPRVEITSSGFIKSRHLDDKASVALLLRLIHEIQTEDIELPYTTHFLISNNEEIGYGGNSNIPPETVEYLAVDMGAIGDGQATDEYSVSICVKDASGPYHYQLRKHLVQLAEKHHIDYKLDIYPYYGSDASAAIKSGHDIVHGLIGPGIDASHAFERTHKSSLRHTAKLLYYYVQSPMV.

The a divalent metal cation site is built by H68 and D185. E219 functions as the Proton acceptor in the catalytic mechanism. Positions 220, 240, and 320 each coordinate a divalent metal cation.

This sequence belongs to the peptidase M42 family. It depends on a divalent metal cation as a cofactor.

The polypeptide is Putative aminopeptidase YhfE (yhfE) (Bacillus subtilis (strain 168)).